The chain runs to 115 residues: U3-lycotoxin-Ls1a (115 aa).

A signal peptide spans 1-20; sequence MKFVLLFGVLLVTLFSYSSA. Positions 21-44 are excised as a propeptide; it reads EMLDDFDQADEDELLSSIEKEEAR. 4 disulfides stabilise this stretch: C48/C63, C55/C72, C62/C87, and C74/C85.

The protein belongs to the neurotoxin 19 (CSTX) family. 01 subfamily. As to expression, expressed by the venom gland.

The protein resides in the secreted. The chain is U3-lycotoxin-Ls1a from Lycosa singoriensis (Wolf spider).